A 218-amino-acid chain; its full sequence is Cytidylate kinase (218 aa).

21 to 29 (GPAASGKGT) lines the ATP pocket.

Belongs to the cytidylate kinase family. Type 1 subfamily.

It is found in the cytoplasm. The enzyme catalyses CMP + ATP = CDP + ADP. The catalysed reaction is dCMP + ATP = dCDP + ADP. This chain is Cytidylate kinase, found in Rickettsia canadensis (strain McKiel).